The following is a 662-amino-acid chain: High affinity sulfate transporter 2 (662 aa).

Residues 1 to 35 (MSQRVSDQAMAEVIAETRTNSSSRRHGGGDDTPSL) form a disordered region. Transmembrane regions (helical) follow at residues 103-123 (GDFI…LAYA), 128-148 (LDPW…AFMG), 153-173 (IAIG…SNEI), 182-202 (LRLA…LGVC), 205-225 (GFLI…GAAI), 264-284 (WETI…KYIA), 291-311 (FWVS…FVYI), 346-366 (AGVR…MAIG), 383-403 (MVAM…VTTG), 420-440 (VSNI…TPLF), 447-467 (VLAS…AMVL), and 481-501 (GAFF…AVAI). The STAS domain maps to 532–655 (QYPKAEQIPG…LTVADAVATY (124 aa)).

Belongs to the SLC26A/SulP transporter (TC 2.A.53) family.

The protein resides in the membrane. High-affinity H(+)/sulfate cotransporter that mediates the uptake of sulfate by plant roots from low concentrations of sulfate in the soil solution. The sequence is that of High affinity sulfate transporter 2 (ST2) from Stylosanthes hamata (Caribbean stylo).